A 396-amino-acid chain; its full sequence is Elongation factor Tu (396 aa).

One can recognise a tr-type G domain in the interval 10-206 (KPHCNIGTIG…AVDAYIPQPE (197 aa)). The G1 stretch occupies residues 19–26 (GHVDHGKT). 19-26 (GHVDHGKT) provides a ligand contact to GTP. Threonine 26 provides a ligand contact to Mg(2+). The G2 stretch occupies residues 60-64 (GITIS). Positions 81-84 (DCPG) are G3. GTP contacts are provided by residues 81-85 (DCPGH) and 136-139 (NKCD). The tract at residues 136-139 (NKCD) is G4. Positions 174–176 (SAL) are G5.

Belongs to the TRAFAC class translation factor GTPase superfamily. Classic translation factor GTPase family. EF-Tu/EF-1A subfamily. In terms of assembly, monomer.

The protein resides in the cytoplasm. It carries out the reaction GTP + H2O = GDP + phosphate + H(+). GTP hydrolase that promotes the GTP-dependent binding of aminoacyl-tRNA to the A-site of ribosomes during protein biosynthesis. This Rhodopseudomonas palustris (strain HaA2) protein is Elongation factor Tu.